A 326-amino-acid chain; its full sequence is Cinnamoyl-CoA reductase CAD2 (326 aa).

NADP(+)-binding positions include 14-20 (GASGYIA), Arg-39, Lys-46, 66-67 (NL), and 86-88 (TAS). (E)-coniferaldehyde contacts are provided by Ser-130, Tyr-136, Arg-141, and Tyr-165. Residues Tyr-165, Lys-169, 192 to 195 (PAMV), and Ser-207 contribute to the NADP(+) site. Lys-169 acts as the Proton donor in catalysis. (E)-coniferaldehyde contacts are provided by Met-194, Ser-207, Phe-226, Val-257, and Tyr-290.

This sequence belongs to the NAD(P)-dependent epimerase/dehydratase family. Dihydroflavonol-4-reductase subfamily.

The protein resides in the cytoplasm. It catalyses the reaction (E)-cinnamaldehyde + NADP(+) + CoA = (E)-cinnamoyl-CoA + NADPH + H(+). It carries out the reaction (E)-coniferaldehyde + NADP(+) + CoA = (E)-feruloyl-CoA + NADPH + H(+). The catalysed reaction is (E)-4-coumaraldehyde + NADP(+) + CoA = (E)-4-coumaroyl-CoA + NADPH + H(+). It functions in the pathway aromatic compound metabolism; phenylpropanoid biosynthesis. Involved in lignin biosynthesis. Regulates the monolignol composition by catalyzing the conversion of cinnamoyl-CoAs into their corresponding cinnamaldehydes. Can use coumaraldehyde and coniferaldehyde as substrates, but barely sinapaldehyde. The sequence is that of Cinnamoyl-CoA reductase CAD2 from Medicago truncatula (Barrel medic).